A 239-amino-acid chain; its full sequence is Cysteine-rich venom protein ENH1 (239 aa).

Residues 1–18 form the signal peptide; it reads MIVFILLSLAAVLQQFVA. Positions 37–165 constitute an SCP domain; sequence VDMHNSFRRS…PYNYFYVCQY (129 aa). Cystine bridges form between Cys-74/Cys-152, Cys-91/Cys-166, Cys-147/Cys-163, Cys-185/Cys-192, Cys-188/Cys-197, Cys-210/Cys-228, and Cys-219/Cys-232. One can recognise a ShKT domain in the interval 201 to 234; that stretch reads CPITNTFTNCDSLLQQNSCEDSYIKTNCGASCFC.

It belongs to the CRISP family. Expressed by the venom gland.

The protein resides in the secreted. Its function is as follows. Blocks contraction of smooth muscle elicited by high potassium-induced depolarization, but does not block caffeine-stimulated contraction. May target voltage-gated calcium channels on smooth muscle. The protein is Cysteine-rich venom protein ENH1 of Pseudoferania polylepis (Macleay's water snake).